The sequence spans 243 residues: Endochitinase (243 aa).

3 disulfides stabilise this stretch: Cys23-Cys85, Cys97-Cys105, and Cys223-Cys236. The active-site Proton donor is Glu67.

The protein resides in the vacuole. The catalysed reaction is Random endo-hydrolysis of N-acetyl-beta-D-glucosaminide (1-&gt;4)-beta-linkages in chitin and chitodextrins.. Its function is as follows. Defense against chitin-containing fungal pathogens. Shows activity on chitin, tetra-N-acetylglucosamine and chitosan. This is Endochitinase from Carica papaya (Papaya).